Here is a 293-residue protein sequence, read N- to C-terminus: MSLFDWFADRRKGQFVGKVSQETEESDGLWVKCPECGQVVYRKDLHANASVCSNCGYHHRIDSDERIVLIADQGSFKSLDRNLSPTDPLGFKDRRAYADRLRESQASTGMKDGVVTGLCQVEGMPMAMAVMDFRFMGGSMGSVVGEKITRLVERATAQGLPLLIVCASGGARMQEGMLSLMQMAKISGALERHREAELLYMPLLTHPTTGGVTASFAMLGDLILAEPKALIGFAGRRVIEQTLREKLPDNFQTAEYLQEHGFVDTIVPRTQLRKTLASLLLLHGCKAKKAAGK.

The region spanning 29 to 293 (LWVKCPECGQ…GCKAKKAAGK (265 aa)) is the CoA carboxyltransferase N-terminal domain. Residues Cys-33, Cys-36, Cys-52, and Cys-55 each coordinate Zn(2+). The C4-type zinc-finger motif lies at 33–55 (CPECGQVVYRKDLHANASVCSNC).

This sequence belongs to the AccD/PCCB family. Acetyl-CoA carboxylase is a heterohexamer composed of biotin carboxyl carrier protein (AccB), biotin carboxylase (AccC) and two subunits each of ACCase subunit alpha (AccA) and ACCase subunit beta (AccD). Requires Zn(2+) as cofactor.

It localises to the cytoplasm. It carries out the reaction N(6)-carboxybiotinyl-L-lysyl-[protein] + acetyl-CoA = N(6)-biotinyl-L-lysyl-[protein] + malonyl-CoA. The protein operates within lipid metabolism; malonyl-CoA biosynthesis; malonyl-CoA from acetyl-CoA: step 1/1. Its function is as follows. Component of the acetyl coenzyme A carboxylase (ACC) complex. Biotin carboxylase (BC) catalyzes the carboxylation of biotin on its carrier protein (BCCP) and then the CO(2) group is transferred by the transcarboxylase to acetyl-CoA to form malonyl-CoA. In Prochlorococcus marinus (strain MIT 9303), this protein is Acetyl-coenzyme A carboxylase carboxyl transferase subunit beta.